Consider the following 378-residue polypeptide: Alanine racemase (378 aa).

Lys40 functions as the Proton acceptor; specific for D-alanine in the catalytic mechanism. Residue Lys40 is modified to N6-(pyridoxal phosphate)lysine. Arg140 is a binding site for substrate. The active-site Proton acceptor; specific for L-alanine is the Tyr270. Met317 serves as a coordination point for substrate.

It belongs to the alanine racemase family. The cofactor is pyridoxal 5'-phosphate.

It catalyses the reaction L-alanine = D-alanine. The protein operates within amino-acid biosynthesis; D-alanine biosynthesis; D-alanine from L-alanine: step 1/1. Its function is as follows. Catalyzes the interconversion of L-alanine and D-alanine. May also act on other amino acids. This is Alanine racemase (alr) from Lacticaseibacillus paracasei (strain ATCC 334 / BCRC 17002 / CCUG 31169 / CIP 107868 / KCTC 3260 / NRRL B-441) (Lactobacillus paracasei).